The chain runs to 156 residues: ATP synthase subunit b (156 aa).

The chain crosses the membrane as a helical span at residues alanine 11–alanine 31.

The protein belongs to the ATPase B chain family. As to quaternary structure, F-type ATPases have 2 components, F(1) - the catalytic core - and F(0) - the membrane proton channel. F(1) has five subunits: alpha(3), beta(3), gamma(1), delta(1), epsilon(1). F(0) has three main subunits: a(1), b(2) and c(10-14). The alpha and beta chains form an alternating ring which encloses part of the gamma chain. F(1) is attached to F(0) by a central stalk formed by the gamma and epsilon chains, while a peripheral stalk is formed by the delta and b chains.

It localises to the cell inner membrane. F(1)F(0) ATP synthase produces ATP from ADP in the presence of a proton or sodium gradient. F-type ATPases consist of two structural domains, F(1) containing the extramembraneous catalytic core and F(0) containing the membrane proton channel, linked together by a central stalk and a peripheral stalk. During catalysis, ATP synthesis in the catalytic domain of F(1) is coupled via a rotary mechanism of the central stalk subunits to proton translocation. Its function is as follows. Component of the F(0) channel, it forms part of the peripheral stalk, linking F(1) to F(0). The polypeptide is ATP synthase subunit b (Aeromonas hydrophila subsp. hydrophila (strain ATCC 7966 / DSM 30187 / BCRC 13018 / CCUG 14551 / JCM 1027 / KCTC 2358 / NCIMB 9240 / NCTC 8049)).